Here is a 100-residue protein sequence, read N- to C-terminus: Urease subunit gamma (100 aa).

This sequence belongs to the urease gamma subunit family. As to quaternary structure, heterotrimer of UreA (gamma), UreB (beta) and UreC (alpha) subunits. Three heterotrimers associate to form the active enzyme.

It is found in the cytoplasm. It catalyses the reaction urea + 2 H2O + H(+) = hydrogencarbonate + 2 NH4(+). It participates in nitrogen metabolism; urea degradation; CO(2) and NH(3) from urea (urease route): step 1/1. This chain is Urease subunit gamma, found in Pseudomonas aeruginosa (strain LESB58).